Reading from the N-terminus, the 444-residue chain is Protein CPn_0808/CP_1063/CPj0808/CpB0837 (444 aa).

Polar residues predominate over residues M1–P13. Residues M1–T124 are disordered. Over residues L15–Q24 the composition is skewed to low complexity. Over residues K25–G42 the composition is skewed to polar residues. Residues S77 to G86 are compositionally biased toward basic and acidic residues. The span at S88–A103 shows a compositional bias: low complexity. The segment covering R113–T124 has biased composition (polar residues).

The protein belongs to the chlamydial CPn_0808/CT_579/TC_0868 family.

This is Protein CPn_0808/CP_1063/CPj0808/CpB0837 from Chlamydia pneumoniae (Chlamydophila pneumoniae).